The sequence spans 755 residues: Elongation factor G, mitochondrial (755 aa).

Residues 1-38 constitute a mitochondrion transit peptide; the sequence is MFKRVGLIAGIAGPVAGSSRFSAVSFSKRAFSASSKRC. Residues 63 to 344 enclose the tr-type G domain; the sequence is KKLRNIGISA…AIVEYLPNPS (282 aa). GTP contacts are provided by residues 72-79, 143-147, and 197-200; these read AHIDSGKT, DTPGH, and NKMD.

This sequence belongs to the TRAFAC class translation factor GTPase superfamily. Classic translation factor GTPase family. EF-G/EF-2 subfamily.

The protein resides in the mitochondrion. The protein operates within protein biosynthesis; polypeptide chain elongation. Mitochondrial GTPase that catalyzes the GTP-dependent ribosomal translocation step during translation elongation. During this step, the ribosome changes from the pre-translocational (PRE) to the post-translocational (POST) state as the newly formed A-site-bound peptidyl-tRNA and P-site-bound deacylated tRNA move to the P and E sites, respectively. Catalyzes the coordinated movement of the two tRNA molecules, the mRNA and conformational changes in the ribosome. This Kluyveromyces lactis (strain ATCC 8585 / CBS 2359 / DSM 70799 / NBRC 1267 / NRRL Y-1140 / WM37) (Yeast) protein is Elongation factor G, mitochondrial.